The chain runs to 297 residues: MDSAAPREPGATEPPARARPRLVFRTQLAHGSPTGRIEGFTNVRELYAKIAEAFGIAPTEILFCTLNSHKVDMQKLLGGQIGLEDFIFAHVRGETKEVEVTKTEDALGLTITDNGAGYAFIKRIKEGSIINRIEAVCVGDSIEAINDHSIVGCRHYEVAKMLRELPKSQPFTLRLVQPRRAFDMIGQRSRSSKCPVEAKVSSGRETLRLRSGGAATVEEAPSDVEAAAARRVDDLLESYMGIRDPELAAAVVETARSSAGAQAFARGLDAVLGEFAFPDEFVVEVWAAIGEAHDACG.

The 81-residue stretch at 97–177 (EVEVTKTEDA…SQPFTLRLVQ (81 aa)) folds into the PDZ domain.

This sequence belongs to the GIPC family. Expressed in adult lung, brain and testis. In the inner ear, it is expressed in the inner and outer hair cells of the organ of Corti. Also expressed in cochlear spiral ganglion neurons.

Functionally, required for postnatal maturation of the hair bundle and long-term survival of hair cells and spiral ganglion. The protein is PDZ domain-containing protein GIPC3 (Gipc3) of Mus musculus (Mouse).